The chain runs to 312 residues: Probable carboxylesterase 7 (312 aa).

M1 carries the post-translational modification N-acetylmethionine. Residues 75-77 (HGG) carry the Involved in the stabilization of the negatively charged intermediate by the formation of the oxyanion hole motif. Residues S159, D255, and H287 contribute to the active site.

Belongs to the 'GDXG' lipolytic enzyme family. As to expression, expressed in leaves, stems, flowers and siliques.

The enzyme catalyses a carboxylic ester + H2O = an alcohol + a carboxylate + H(+). Carboxylesterase acting on esters with varying acyl chain length. The chain is Probable carboxylesterase 7 (CXE7) from Arabidopsis thaliana (Mouse-ear cress).